Consider the following 151-residue polypeptide: Putative phosphatidylglycerol/phosphatidylinositol transfer protein 1 (151 aa).

A signal peptide spans 1-26; sequence MKHSKNQIVYITFFIIILIVVKPIES.

Belongs to the NPC2 family. Monomer.

Functionally, catalyzes the intermembrane transfer of phosphatidylglycerol and phosphatidylinositol. In Dictyostelium discoideum (Social amoeba), this protein is Putative phosphatidylglycerol/phosphatidylinositol transfer protein 1.